Consider the following 433-residue polypeptide: Trigger factor (433 aa).

Residues 163 to 248 (GDTVNIDFSG…VNEIKFKEVP (86 aa)) enclose the PPIase FKBP-type domain.

Belongs to the FKBP-type PPIase family. Tig subfamily.

It is found in the cytoplasm. It carries out the reaction [protein]-peptidylproline (omega=180) = [protein]-peptidylproline (omega=0). Its function is as follows. Involved in protein export. Acts as a chaperone by maintaining the newly synthesized protein in an open conformation. Functions as a peptidyl-prolyl cis-trans isomerase. In Staphylococcus aureus (strain bovine RF122 / ET3-1), this protein is Trigger factor.